The primary structure comprises 97 residues: HssA/B-like protein 32 (97 aa).

2 disordered regions span residues 1-23 and 62-97; these read MTLF…SLAS and AKSS…GSCS. Residues 62–74 show a composition bias toward gly residues; sequence AKSSGGSCGGKGG. The span at 75 to 88 shows a compositional bias: basic residues; sequence SHNHGHGHGPHGHG.

It belongs to the hssA/B family.

The polypeptide is HssA/B-like protein 32 (hssl32) (Dictyostelium discoideum (Social amoeba)).